The following is a 450-amino-acid chain: FAD-dependent monooxygenase okaB (450 aa).

The helical transmembrane segment at 14–34 threads the bilayer; the sequence is IVIIIVGLGIAGLSAAIECHG. Glu-43 and Arg-116 together coordinate FAD. Arg-194 is an active-site residue. Residues Asp-318 and Gly-331 each contribute to the FAD site.

This sequence belongs to the paxM FAD-dependent monooxygenase family.

Its subcellular location is the membrane. It catalyses the reaction cyclo(N(8)-(alpha,alpha-dimethylallyl)-L-Trp-6a-(alpha,alpha-dimethylallyl)-L-Trp) + AH2 + O2 = okaramine C + A + H2O. It functions in the pathway alkaloid biosynthesis. Its function is as follows. FAD-dependent monooxygenase; part of the gene cluster that mediates the biosynthesis of okaramine B, a prenylated indole alkaloid that possesses an unusual octacyclic ring system, including a four-membered azetidine ring and an eight-membered azocine ring, and that exhibits insecticidal activity against silkworm larvae. Within the pathway, okaC performs indole 2,3-epoxidation, facilitating the formation of the hexahydropyrrolo[2,3-b]indole (HPI) moiety of okaramine C. okaC then performs asymmetric reverse prenylation of cyclo(L-Trp-L-Trp) at N-1 and C-2' of the indole ring to produce the cyclic prenylated tryptophan dimer cyclo(N8-(alpha,alpha-dimethylallyl)-L-Trp-6a-(alpha,alpha-dime-thylallyl)-L-Trp). The biosynthesis begins with the NRPS okaA that condenses two tryptophan molecules into cyclo(L-Trp-L-Trp). Prenylation by the prenyltransferase okaC then leads to the formation of cyclo(N8-(alpha,alpha-dimethylallyl)-L-Trp-6a-(alpha,alpha-dime-thylallyl)-L-Trp). This is followed by indole 2,3-epoxidation by the FAD-dependent monooxygenase okaB to facilitate the formation of the hexahydropyrrolo[2,3-b]indole (HPI) moiety of okaramine C. The cytochrome P450 monooxygenase okaD then likely catalyzes formation of the eight-membered ring of okaramine A. The dioxygenase okaE further forms the unusual 2-dimethyl-3-methyl-azetidine ring to yield 12-deshydroxyl okaramine E, as well as the hydroxylation of 12-deshydroxyl okaramine E to produce okaramine E. The cytochrome P450 monoxygenase okaG converts 12-deshydroxyl okaramine E into 3-desmethyl okaramine B which is further methylated by the methyltransferase okaF into okaramine B. In a shunt pathway, okaG and okaF together are also able to convert okaramine E into okaramine D. Okaramine H is produced by nonenzymatic conversion from okaramine A. In Penicillium ochrochloron, this protein is FAD-dependent monooxygenase okaB.